We begin with the raw amino-acid sequence, 599 residues long: Vitamin B12-dependent ribonucleotide reductase (599 aa).

193–197 (PTGTI) provides a ligand contact to substrate. Residues 519–555 (LAQSAPRQAGPAKAATTAPAAKAQEPAAAPSPKQAHN) form a disordered region. Low complexity predominate over residues 526 to 553 (QAGPAKAATTAPAAKAQEPAAAPSPKQA).

Belongs to the ribonucleoside diphosphate reductase class-2 family. Requires adenosylcob(III)alamin as cofactor.

The catalysed reaction is a 2'-deoxyribonucleoside 5'-diphosphate + [thioredoxin]-disulfide + H2O = a ribonucleoside 5'-diphosphate + [thioredoxin]-dithiol. Catalyzes the reduction of ribonucleotides to deoxyribonucleotides. May function to provide a pool of deoxyribonucleotide precursors for DNA repair during oxygen limitation and/or for immediate growth after restoration of oxygen. The polypeptide is Vitamin B12-dependent ribonucleotide reductase (nrdJ) (Streptantibioticus cattleyicolor (Streptomyces cattleya)).